A 275-amino-acid chain; its full sequence is Autophagy protein 5 (275 aa).

Met1 is modified (N-acetylmethionine). Lys130 participates in a covalent cross-link: Glycyl lysine isopeptide (Lys-Gly) (interchain with G-Cter in ATG12).

This sequence belongs to the ATG5 family. Forms a conjugate with ATG12. Part of the minor complex composed of 4 sets of ATG12-ATG5 and ATG16L1 (400 kDa); this complex interacts with ATG3 leading to disruption of ATG7 interaction and promotion of ATG8-like proteins lipidation. Forms an 800-kDa complex composed of ATG12-ATG5 and ATG16L2. The ATG12-ATG5 conjugate interacts with RAB33A; this interaction is bridged by ATG16L1 and promotes ATG12-ATG5-ATG16L1 complex recruitment to phagophores. Interacts with TECPR1; the interaction is direct and does not take place when ATG16L1 is associated with the ATG5-ATG12 conjugate. Interacts with DHX58/RIG-1, IFIH1/MDA5 and MAVS/IPS-1 in monomeric form as well as in ATG12-ATG5 conjugate form. The interaction with MAVS is further enhanced upon vesicular stomatitis virus (VSV) infection. Interacts with ATG3. Interacts with ATG7 and ATG10. Interacts with FADD. Interacts with Bassoon/BSN; this interaction is important for the regulation of presynaptic autophagy. Interacts with ATG16L2. Post-translationally, conjugated to ATG12; which is essential for autophagy, but is not required for association with isolation membrane. In terms of processing, acetylated by EP300. Ubiquitous.

It is found in the cytoplasm. The protein resides in the preautophagosomal structure membrane. In terms of biological role, involved in autophagic vesicle formation. Conjugation with ATG12, through a ubiquitin-like conjugating system involving ATG7 as an E1-like activating enzyme and ATG10 as an E2-like conjugating enzyme, is essential for its function. The ATG12-ATG5 conjugate acts as an E3-like enzyme which is required for lipidation of ATG8 family proteins and their association to the vesicle membranes. Involved in mitochondrial quality control after oxidative damage, and in subsequent cellular longevity. Plays a critical role in multiple aspects of lymphocyte development and is essential for both B and T lymphocyte survival and proliferation. Required for optimal processing and presentation of antigens for MHC II. Involved in the maintenance of axon morphology and membrane structures, as well as in normal adipocyte differentiation. Promotes primary ciliogenesis through removal of OFD1 from centriolar satellites and degradation of IFT20 via the autophagic pathway. As part of the ATG8 conjugation system with ATG12 and ATG16L1, required for recruitment of LRRK2 to stressed lysosomes and induction of LRRK2 kinase activity in response to lysosomal stress. Functionally, may play an important role in the apoptotic process, possibly within the modified cytoskeleton. Its expression is a relatively late event in the apoptotic process, occurring downstream of caspase activity. Plays a crucial role in IFN-gamma-induced autophagic cell death by interacting with FADD. (Microbial infection) May act as a proviral factor. In association with ATG12, negatively regulates the innate antiviral immune response by impairing the type I IFN production pathway upon vesicular stomatitis virus (VSV) infection. The protein is Autophagy protein 5 of Mus musculus (Mouse).